We begin with the raw amino-acid sequence, 427 residues long: Glutamate-1-semialdehyde 2,1-aminomutase 1 (427 aa).

K265 is modified (N6-(pyridoxal phosphate)lysine).

This sequence belongs to the class-III pyridoxal-phosphate-dependent aminotransferase family. HemL subfamily. In terms of assembly, homodimer. Pyridoxal 5'-phosphate serves as cofactor.

It localises to the cytoplasm. It carries out the reaction (S)-4-amino-5-oxopentanoate = 5-aminolevulinate. It functions in the pathway porphyrin-containing compound metabolism; protoporphyrin-IX biosynthesis; 5-aminolevulinate from L-glutamyl-tRNA(Glu): step 2/2. The chain is Glutamate-1-semialdehyde 2,1-aminomutase 1 from Lachnoclostridium phytofermentans (strain ATCC 700394 / DSM 18823 / ISDg) (Clostridium phytofermentans).